The sequence spans 781 residues: Probable serine/threonine-protein kinase C70.05c (781 aa).

2 disordered regions span residues 1 to 315 and 368 to 417; these read MPSD…PLVS and YSGK…TNIS. The span at 21-31 shows a compositional bias: low complexity; the sequence is ESPSSRSIGSG. Residues 43–63 are compositionally biased toward polar residues; sequence FKNSFLSRKNSSQIKSPSDYK. A compositionally biased stretch (basic and acidic residues) spans 64–73; sequence SSAHEQRVNH. The span at 74–92 shows a compositional bias: polar residues; that stretch reads TTDSMAHVPGNNSPLQTPQ. S94 is subject to Phosphoserine. The segment covering 112-121 has biased composition (basic residues); that stretch reads SRHHKPHHSG. 3 stretches are compositionally biased toward polar residues: residues 136–146, 161–195, and 206–228; these read SNANSPTSESP, KNTS…PNSR, and NSAS…SLSR. S253 is modified (phosphoserine). Residues 272 to 304 are compositionally biased toward low complexity; it reads PLTASPTPSSPTGTPNSMSKSPSLSSLASTGAS. Over residues 379 to 406 the composition is skewed to polar residues; it reads NVGSSANTAPNSPTSANSSEGNQGNGPT. Residues 432–742 enclose the Protein kinase domain; it reads AKRVVPRLSA…AQEALNLPFV (311 aa). Residues 452-460 and K480 each bind ATP; that span reads MGSGATAVI. D584 serves as the catalytic Proton acceptor.

The protein belongs to the protein kinase superfamily. Ser/Thr protein kinase family.

Its subcellular location is the cytoplasm. It carries out the reaction L-seryl-[protein] + ATP = O-phospho-L-seryl-[protein] + ADP + H(+). The enzyme catalyses L-threonyl-[protein] + ATP = O-phospho-L-threonyl-[protein] + ADP + H(+). The polypeptide is Probable serine/threonine-protein kinase C70.05c (Schizosaccharomyces pombe (strain 972 / ATCC 24843) (Fission yeast)).